Reading from the N-terminus, the 141-residue chain is MSNKKVIKLIKLQIPGGKANPAPPIGPALGAAGVNIMGFCKEFNAATQDRPGDLLPVVITVYSDKTFTFITKQPPVSSLIKKALNLESGSKIPNRNKVGKLTQAQVTAIAEQKMKDMDVVLLDSAKRMVEGTARSMGIDVE.

The protein belongs to the universal ribosomal protein uL11 family. In terms of assembly, part of the ribosomal stalk of the 50S ribosomal subunit. Interacts with L10 and the large rRNA to form the base of the stalk. L10 forms an elongated spine to which L12 dimers bind in a sequential fashion forming a multimeric L10(L12)X complex. In terms of processing, one or more lysine residues are methylated.

Its function is as follows. Forms part of the ribosomal stalk which helps the ribosome interact with GTP-bound translation factors. The chain is Large ribosomal subunit protein uL11 from Chlamydia caviae (strain ATCC VR-813 / DSM 19441 / 03DC25 / GPIC) (Chlamydophila caviae).